The following is a 594-amino-acid chain: Probable Xaa-Pro aminopeptidase P (594 aa).

Residues Asp-391, Asp-402, Glu-500, and Glu-514 each coordinate Mn(2+).

This sequence belongs to the peptidase M24B family. The cofactor is Mn(2+).

The enzyme catalyses Release of any N-terminal amino acid, including proline, that is linked to proline, even from a dipeptide or tripeptide.. In terms of biological role, catalyzes the removal of a penultimate prolyl residue from the N-termini of peptides. This is Probable Xaa-Pro aminopeptidase P (ampp) from Pyrenophora tritici-repentis (strain Pt-1C-BFP) (Wheat tan spot fungus).